Consider the following 175-residue polypeptide: Transcription factor HES-3 (175 aa).

A bHLH domain is found at 1-49 (MEKKRRARINVSLEQLRSLLERHYSHQIRKRKLEKADILELSVKYMRSL). Residues 65 to 98 (YPSGFQGGLRGVSQRLRPGEGDSGLRCPLLLQRR) enclose the Orange domain. The disordered stretch occupies residues 126–166 (RAAGGSHSPQSPLPLPGGLLESSTDVVAPHPASNCQAESTR). Residues 129–148 (GGSHSPQSPLPLPGGLLESS) are compositionally biased toward low complexity. A WRPW motif motif is present at residues 172–175 (WRPW).

As to quaternary structure, transcription repression requires formation of a complex with a corepressor protein of the Groucho/TLE family.

It localises to the nucleus. Transcriptional repressor of genes that require a bHLH protein for their transcription. In Mus musculus (Mouse), this protein is Transcription factor HES-3 (Hes3).